The following is a 144-amino-acid chain: Deoxyuridine 5'-triphosphate nucleotidohydrolase (144 aa).

Substrate-binding positions include 63-65, asparagine 76, and 80-82; these read RSG and TID.

The protein belongs to the dUTPase family. Mg(2+) is required as a cofactor.

The catalysed reaction is dUTP + H2O = dUMP + diphosphate + H(+). Its pathway is pyrimidine metabolism; dUMP biosynthesis; dUMP from dCTP (dUTP route): step 2/2. In terms of biological role, this enzyme is involved in nucleotide metabolism: it produces dUMP, the immediate precursor of thymidine nucleotides and it decreases the intracellular concentration of dUTP so that uracil cannot be incorporated into DNA. This Alkaliphilus metalliredigens (strain QYMF) protein is Deoxyuridine 5'-triphosphate nucleotidohydrolase.